The primary structure comprises 544 residues: Membrane protein insertase YidC (544 aa).

The next 5 helical transmembrane spans lie at Leu-15–Phe-35, Leu-321–Pro-341, Trp-343–Phe-363, Leu-409–Val-429, and Met-506–Ile-526.

It belongs to the OXA1/ALB3/YidC family. Type 1 subfamily. Interacts with the Sec translocase complex via SecD. Specifically interacts with transmembrane segments of nascent integral membrane proteins during membrane integration.

Its subcellular location is the cell inner membrane. Functionally, required for the insertion and/or proper folding and/or complex formation of integral membrane proteins into the membrane. Involved in integration of membrane proteins that insert both dependently and independently of the Sec translocase complex, as well as at least some lipoproteins. Aids folding of multispanning membrane proteins. The protein is Membrane protein insertase YidC of Borrelia garinii subsp. bavariensis (strain ATCC BAA-2496 / DSM 23469 / PBi) (Borreliella bavariensis).